A 152-amino-acid polypeptide reads, in one-letter code: Transcriptional regulator MraZ (152 aa).

SpoVT-AbrB domains lie at 5 to 52 (ASAI…PIHE) and 81 to 124 (AHEV…DEQS).

This sequence belongs to the MraZ family. As to quaternary structure, forms oligomers.

Its subcellular location is the cytoplasm. It localises to the nucleoid. In Shewanella baltica (strain OS195), this protein is Transcriptional regulator MraZ.